Consider the following 275-residue polypeptide: Phosphate import ATP-binding protein PstB (275 aa).

The 243-residue stretch at 28–270 (MSAKNVSVFY…PREERTKDYI (243 aa)) folds into the ABC transporter domain. 60–67 (GPSGCGKS) contributes to the ATP binding site.

Belongs to the ABC transporter superfamily. Phosphate importer (TC 3.A.1.7) family. As to quaternary structure, the complex is composed of two ATP-binding proteins (PstB), two transmembrane proteins (PstC and PstA) and a solute-binding protein (PstS).

It localises to the cell inner membrane. It catalyses the reaction phosphate(out) + ATP + H2O = ADP + 2 phosphate(in) + H(+). In terms of biological role, part of the ABC transporter complex PstSACB involved in phosphate import. Responsible for energy coupling to the transport system. The polypeptide is Phosphate import ATP-binding protein PstB (Novosphingobium aromaticivorans (strain ATCC 700278 / DSM 12444 / CCUG 56034 / CIP 105152 / NBRC 16084 / F199)).